Consider the following 153-residue polypeptide: Ribonuclease H (153 aa).

Residues 1-142 enclose the RNase H type-1 domain; the sequence is MLKTIKIFSD…CDHLARESAK (142 aa). The Mg(2+) site is built by D10, E48, D70, and D134.

The protein belongs to the RNase H family. In terms of assembly, monomer. Requires Mg(2+) as cofactor.

The protein localises to the cytoplasm. The catalysed reaction is Endonucleolytic cleavage to 5'-phosphomonoester.. Endonuclease that specifically degrades the RNA of RNA-DNA hybrids. In Buchnera aphidicola subsp. Baizongia pistaciae (strain Bp), this protein is Ribonuclease H.